Reading from the N-terminus, the 238-residue chain is Probable transcriptional regulatory protein VS_II1504 (238 aa).

The protein belongs to the TACO1 family.

It localises to the cytoplasm. In Vibrio atlanticus (strain LGP32) (Vibrio splendidus (strain Mel32)), this protein is Probable transcriptional regulatory protein VS_II1504.